A 92-amino-acid chain; its full sequence is Small integral membrane protein 12 (92 aa).

A helical membrane pass occupies residues 15–34 (YVTFPVAFVVGAVGYHLEWF).

The protein belongs to the SMIM12 family.

The protein localises to the membrane. This Mus musculus (Mouse) protein is Small integral membrane protein 12 (Smim12).